The sequence spans 251 residues: DNA polymerase sliding clamp 2 (251 aa).

The protein belongs to the PCNA family. In terms of assembly, heterotrimer. The subunits circularize to form a toroid; DNA passes through its center. Replication factor C (RFC) is required to load the toroid on the DNA.

Functionally, sliding clamp subunit that acts as a moving platform for DNA processing. Responsible for tethering the catalytic subunit of DNA polymerase and other proteins to DNA during high-speed replication. The sequence is that of DNA polymerase sliding clamp 2 from Aeropyrum pernix (strain ATCC 700893 / DSM 11879 / JCM 9820 / NBRC 100138 / K1).